The sequence spans 207 residues: Holliday junction branch migration complex subunit RuvA (207 aa).

The interval 1–64 (MIGLINGQVQ…EDAQLLYGFI (64 aa)) is domain I. Residues 65–143 (DRKERDVFRQ…NIEVDSSHLE (79 aa)) are domain II. The segment at 144–152 (FAMQPAPIS) is flexible linker. The tract at residues 153–207 (AEGSIIAEVEGALISLGYKEREAQQAIKAAKSNGETFADTQSLLKATLQQFQSFK) is domain III.

It belongs to the RuvA family. In terms of assembly, homotetramer. Forms an RuvA(8)-RuvB(12)-Holliday junction (HJ) complex. HJ DNA is sandwiched between 2 RuvA tetramers; dsDNA enters through RuvA and exits via RuvB. An RuvB hexamer assembles on each DNA strand where it exits the tetramer. Each RuvB hexamer is contacted by two RuvA subunits (via domain III) on 2 adjacent RuvB subunits; this complex drives branch migration. In the full resolvosome a probable DNA-RuvA(4)-RuvB(12)-RuvC(2) complex forms which resolves the HJ.

It is found in the cytoplasm. The RuvA-RuvB-RuvC complex processes Holliday junction (HJ) DNA during genetic recombination and DNA repair, while the RuvA-RuvB complex plays an important role in the rescue of blocked DNA replication forks via replication fork reversal (RFR). RuvA specifically binds to HJ cruciform DNA, conferring on it an open structure. The RuvB hexamer acts as an ATP-dependent pump, pulling dsDNA into and through the RuvAB complex. HJ branch migration allows RuvC to scan DNA until it finds its consensus sequence, where it cleaves and resolves the cruciform DNA. The polypeptide is Holliday junction branch migration complex subunit RuvA (Psychrobacter cryohalolentis (strain ATCC BAA-1226 / DSM 17306 / VKM B-2378 / K5)).